Reading from the N-terminus, the 62-residue chain is Sperm protamine P1 (62 aa).

The interval 1–62 (MARYRRRSRS…RYSRRGRRRY (62 aa)) is disordered.

This sequence belongs to the protamine P1 family. As to expression, testis.

Its subcellular location is the nucleus. The protein resides in the chromosome. Its function is as follows. Protamines substitute for histones in the chromatin of sperm during the haploid phase of spermatogenesis. They compact sperm DNA into a highly condensed, stable and inactive complex. The sequence is that of Sperm protamine P1 (PRM1) from Sarcophilus harrisii (Tasmanian devil).